Reading from the N-terminus, the 190-residue chain is Elongation factor P 1 (190 aa).

The protein belongs to the elongation factor P family.

The protein resides in the cytoplasm. It participates in protein biosynthesis; polypeptide chain elongation. Its function is as follows. Involved in peptide bond synthesis. Stimulates efficient translation and peptide-bond synthesis on native or reconstituted 70S ribosomes in vitro. Probably functions indirectly by altering the affinity of the ribosome for aminoacyl-tRNA, thus increasing their reactivity as acceptors for peptidyl transferase. The chain is Elongation factor P 1 (efp1) from Lactobacillus johnsonii (strain CNCM I-12250 / La1 / NCC 533).